The sequence spans 73 residues: MKADIHPDYHTIKVVMTDGTEYETRSTWGTEGATMNLEIDPKSHPAWTGGNQQLVDRGGRVSKFKKRFEGLGL.

The protein belongs to the bacterial ribosomal protein bL31 family. Type A subfamily. In terms of assembly, part of the 50S ribosomal subunit.

In terms of biological role, binds the 23S rRNA. In Rhizobium meliloti (strain 1021) (Ensifer meliloti), this protein is Large ribosomal subunit protein bL31.